The primary structure comprises 248 residues: Triosephosphate isomerase (248 aa).

9-11 serves as a coordination point for substrate; it reads NWK. His-94 (electrophile) is an active-site residue. Catalysis depends on Glu-166, which acts as the Proton acceptor. Residues Gly-172, Ser-212, and 233 to 234 contribute to the substrate site; that span reads GG.

This sequence belongs to the triosephosphate isomerase family. In terms of assembly, homodimer.

It is found in the cytoplasm. It carries out the reaction D-glyceraldehyde 3-phosphate = dihydroxyacetone phosphate. Its pathway is carbohydrate biosynthesis; gluconeogenesis. The protein operates within carbohydrate degradation; glycolysis; D-glyceraldehyde 3-phosphate from glycerone phosphate: step 1/1. Its function is as follows. Involved in the gluconeogenesis. Catalyzes stereospecifically the conversion of dihydroxyacetone phosphate (DHAP) to D-glyceraldehyde-3-phosphate (G3P). This chain is Triosephosphate isomerase, found in Alkaliphilus metalliredigens (strain QYMF).